The chain runs to 2210 residues: RNA-directed RNA polymerase L (2210 aa).

The interval 26 to 284 is endonuclease; the sequence is KDAFLSHCHS…KHEDNTTSDC (259 aa). Mn(2+) is bound by residues glutamate 51, aspartate 89, and glutamate 102. Lysine 115 is an active-site residue. The RdRp catalytic domain maps to 1172–1368; it reads CDMKLAVNNG…YLSSKLNKFV (197 aa). Aspartate 1330 is a Mg(2+) binding site.

The protein belongs to the Bunyavirales RNA polymerase family. As to quaternary structure, homomultimer; the oligomeric structure is essential for the polymerase activity. Interacts with nucleoprotein N. Interacts with protein Z; this interaction inhibits viral transcription and replication, Z partially blocks the product exit tunnel for the releasing nascent RNA product. Mn(2+) is required as a cofactor. The cofactor is Mg(2+).

It is found in the virion. It localises to the host cytoplasm. The enzyme catalyses RNA(n) + a ribonucleoside 5'-triphosphate = RNA(n+1) + diphosphate. In terms of biological role, RNA-dependent RNA polymerase, which is responsible for the replication and transcription of the viral RNA genome using antigenomic RNA as an intermediate. During transcription, synthesizes subgenomic RNAs and assures their capping by a cap-snatching mechanism, which involves the endonuclease activity cleaving the host capped pre-mRNAs. These short capped RNAs are then used as primers for viral transcription. The 3'-end of subgenomic mRNAs molecules are heterogeneous and not polyadenylated. The replicase function is to direct synthesis of antigenomic and genomic RNA which are encapsidated and non capped. As a consequence of the use of the same enzyme for both transcription and replication, these mechanisms need to be well coordinated. These processes may be regulated by proteins N and Z in a dose-dependent manner. Z protein inhibits the viral polymerase L und thus the viral transcription and RNA synthesis. The polypeptide is RNA-directed RNA polymerase L (Tacaribe virus (strain Franze-Fernandez) (TCRV)).